We begin with the raw amino-acid sequence, 316 residues long: Dehydrogenase/reductase SDR family protein 7-like (316 aa).

At 1–18 (MFFYKIIYFIGFPYIVLR) the chain is on the cytoplasmic side. A helical; Signal-anchor for type II membrane protein membrane pass occupies residues 19-39 (LIVSIILPIASLYFIYCNFIA). Residues 40–316 (PKLREKPESS…HKFASSSVKK (277 aa)) lie on the Peroxisomal side of the membrane. 56–80 (IITGASSGIGAELAKKYARLGCKVT) provides a ligand contact to NAD(+). Ser194 lines the substrate pocket. The active-site Proton acceptor is the Tyr207.

Belongs to the short-chain dehydrogenases/reductases (SDR) family.

It localises to the peroxisome membrane. Functionally, putative oxidoreductase. In Dictyostelium discoideum (Social amoeba), this protein is Dehydrogenase/reductase SDR family protein 7-like.